The primary structure comprises 196 residues: MKIVLATGNAGKVRELSELLAGTGITILPQSDFGVPEAEENGLSFVENAILKARNAAAHTGLPAIADDSGIEVDALNGSPGIYSARYAGPGGDAEANNRKLLKALEHVESSQRTARFRCVMVYLRHADDPSPVIAEGSWEGRIASEARGPGGHGYDPIFEIPELELTAAEISPAEKNRRSHRGQALRILLERLQGR.

7–12 (TGNAGK) contributes to the substrate binding site. The Mg(2+) site is built by E39 and D68. The active-site Proton acceptor is D68. Residues S69, 153 to 156 (HGYD), K176, and 181 to 182 (HR) each bind substrate.

It belongs to the HAM1 NTPase family. Homodimer. It depends on Mg(2+) as a cofactor.

The enzyme catalyses XTP + H2O = XMP + diphosphate + H(+). It catalyses the reaction dITP + H2O = dIMP + diphosphate + H(+). The catalysed reaction is ITP + H2O = IMP + diphosphate + H(+). In terms of biological role, pyrophosphatase that catalyzes the hydrolysis of nucleoside triphosphates to their monophosphate derivatives, with a high preference for the non-canonical purine nucleotides XTP (xanthosine triphosphate), dITP (deoxyinosine triphosphate) and ITP. Seems to function as a house-cleaning enzyme that removes non-canonical purine nucleotides from the nucleotide pool, thus preventing their incorporation into DNA/RNA and avoiding chromosomal lesions. The sequence is that of dITP/XTP pyrophosphatase from Thioalkalivibrio sulfidiphilus (strain HL-EbGR7).